A 646-amino-acid polypeptide reads, in one-letter code: Zinc finger protein 503 (646 aa).

Residues 1–11 show a composition bias toward polar residues; that stretch reads MSTAPSLSALR. The interval 1–70 is disordered; the sequence is MSTAPSLSAL…PPSDPLRQAN (70 aa). Residues 16–28 are compositionally biased toward gly residues; sequence SGGGGGGGGGGGA. Over residues 34 to 52 the composition is skewed to low complexity; the sequence is SALSGNSSGPGPGSSPAGS. Ser-102 carries the phosphoserine modification. Residues 121 to 332 form a disordered region; that stretch reads SQIGKPDPSP…PSAPTSSSVL (212 aa). The segment covering 130 to 139 has biased composition (low complexity); that stretch reads PSSKLSSVAS. Composition is skewed to gly residues over residues 140 to 152 and 189 to 205; these read NGGGAGGAGGGAA and GGGGGGGGGGGGGGGGV. An N6-acetyllysine modification is found at Lys-209. The span at 217–226 shows a compositional bias: polar residues; that stretch reads ATCQPFTPRT. Low complexity predominate over residues 227–240; sequence GSPSSSASACSPGG. Phosphoserine occurs at positions 231 and 237. The span at 250-259 shows a compositional bias: basic and acidic residues; that stretch reads EGKDDKKDTD. Composition is skewed to gly residues over residues 260–277 and 300–315; these read VGGGGKGTGGASAEGGPT and GGPGGKALGSDCGGSS. The segment covering 316 to 330 has biased composition (low complexity); it reads GSSSGSGPSAPTSSS. The C2H2-type zinc-finger motif lies at 514–542; the sequence is HICNWVSANGPCDKRFATSEELLSHLRTH. Arg-636 carries the post-translational modification Omega-N-methylarginine.

Belongs to the Elbow/Noc family.

The protein resides in the nucleus. Its function is as follows. May function as a transcriptional repressor. The protein is Zinc finger protein 503 (ZNF503) of Homo sapiens (Human).